The sequence spans 288 residues: Acetyl-coenzyme A carboxylase carboxyl transferase subunit beta (288 aa).

In terms of domain architecture, CoA carboxyltransferase N-terminal spans 33–288 (LFSQCPGCKH…LVRLHGGSPR (256 aa)). Positions 37, 40, 55, and 58 each coordinate Zn(2+). Residues 37–58 (CPGCKHTIYQKDLGSERICPHC) form a C4-type zinc finger.

Belongs to the AccD/PCCB family. As to quaternary structure, acetyl-CoA carboxylase is a heterohexamer composed of biotin carboxyl carrier protein (AccB), biotin carboxylase (AccC) and two subunits each of ACCase subunit alpha (AccA) and ACCase subunit beta (AccD). Zn(2+) serves as cofactor.

Its subcellular location is the cytoplasm. It carries out the reaction N(6)-carboxybiotinyl-L-lysyl-[protein] + acetyl-CoA = N(6)-biotinyl-L-lysyl-[protein] + malonyl-CoA. It participates in lipid metabolism; malonyl-CoA biosynthesis; malonyl-CoA from acetyl-CoA: step 1/1. Its function is as follows. Component of the acetyl coenzyme A carboxylase (ACC) complex. Biotin carboxylase (BC) catalyzes the carboxylation of biotin on its carrier protein (BCCP) and then the CO(2) group is transferred by the transcarboxylase to acetyl-CoA to form malonyl-CoA. The polypeptide is Acetyl-coenzyme A carboxylase carboxyl transferase subunit beta (Streptococcus pneumoniae serotype 4 (strain ATCC BAA-334 / TIGR4)).